A 261-amino-acid chain; its full sequence is Thiamine thiazole synthase (261 aa).

Residues A33, E52–R53, G60, V124, and H152–D154 contribute to the NAD(+) site. Fe cation is bound by residues D154 and H169. An NAD(+)-binding site is contributed by I219. R229 is a glycine binding site.

The protein belongs to the THI4 family. In terms of assembly, homooctamer; tetramer of dimers. Fe(2+) serves as cofactor.

The enzyme catalyses hydrogen sulfide + glycine + NAD(+) = ADP-5-ethyl-4-methylthiazole-2-carboxylate + nicotinamide + 3 H2O + H(+). It functions in the pathway cofactor biosynthesis; thiamine diphosphate biosynthesis. Functionally, involved in the biosynthesis of the thiazole moiety of thiamine. Catalyzes the conversion of NAD and glycine to adenosine diphosphate 5-(2-hydroxyethyl)-4-methylthiazole-2-carboxylate (ADT), an adenylated thiazole intermediate, using free sulfide as a source of sulfur. This is Thiamine thiazole synthase from Pyrobaculum aerophilum (strain ATCC 51768 / DSM 7523 / JCM 9630 / CIP 104966 / NBRC 100827 / IM2).